A 396-amino-acid chain; its full sequence is Ribosomal RNA large subunit methyltransferase I (396 aa).

In terms of domain architecture, PUA spans 2 to 81 (TVSIYLAKGR…EAIDKDFFVR (80 aa)).

It belongs to the methyltransferase superfamily. RlmI family.

Its subcellular location is the cytoplasm. It catalyses the reaction cytidine(1962) in 23S rRNA + S-adenosyl-L-methionine = 5-methylcytidine(1962) in 23S rRNA + S-adenosyl-L-homocysteine + H(+). Functionally, specifically methylates the cytosine at position 1962 (m5C1962) of 23S rRNA. The chain is Ribosomal RNA large subunit methyltransferase I from Aliivibrio fischeri (strain ATCC 700601 / ES114) (Vibrio fischeri).